The chain runs to 146 residues: MGKSTFLQDFKAFAMKGNVVDMAVGVIIGGAFGKIVSSVVADIIMPPLGLLIGGVNFTDLKWVMKAAEYGADGKETAAAVTLNYGNFLQATFDFLIIAFSIFLFIKLITKLTQKKAEAPAAPPAPPAPTKEEILLTEIRDLLKEKQ.

The next 2 helical transmembrane spans lie at 12 to 32 and 88 to 108; these read AFAM…GGAF and LQAT…IKLI.

Belongs to the MscL family. As to quaternary structure, homopentamer.

It localises to the cell inner membrane. In terms of biological role, channel that opens in response to stretch forces in the membrane lipid bilayer. May participate in the regulation of osmotic pressure changes within the cell. This is Large-conductance mechanosensitive channel from Bacteroides fragilis (strain ATCC 25285 / DSM 2151 / CCUG 4856 / JCM 11019 / LMG 10263 / NCTC 9343 / Onslow / VPI 2553 / EN-2).